The primary structure comprises 357 residues: Dihydroorotate dehydrogenase (quinone) (357 aa).

FMN contacts are provided by residues 66–70 (AGFDK) and T90. K70 lines the substrate pocket. 115-119 (NRMGF) is a binding site for substrate. The FMN site is built by N143 and N176. N176 provides a ligand contact to substrate. The active-site Nucleophile is S179. N181 provides a ligand contact to substrate. Residues K212 and T240 each contribute to the FMN site. 241–242 (NT) provides a ligand contact to substrate. FMN-binding positions include G264, G293, and 314-315 (YT).

This sequence belongs to the dihydroorotate dehydrogenase family. Type 2 subfamily. As to quaternary structure, monomer. Requires FMN as cofactor.

It is found in the cell membrane. It carries out the reaction (S)-dihydroorotate + a quinone = orotate + a quinol. It functions in the pathway pyrimidine metabolism; UMP biosynthesis via de novo pathway; orotate from (S)-dihydroorotate (quinone route): step 1/1. Functionally, catalyzes the conversion of dihydroorotate to orotate with quinone as electron acceptor. The polypeptide is Dihydroorotate dehydrogenase (quinone) (Mycobacterium tuberculosis (strain ATCC 25177 / H37Ra)).